The primary structure comprises 406 residues: GTPase Obg (406 aa).

An Obg domain is found at 1-159 (MRFVDEAVIT…REIRLELKVL (159 aa)). The interval 120–143 (GGEGGLGNTHFKSSTNRAPRKCTT) is disordered. The region spanning 160-333 (ADVGLLGMPN…VVYYLMDQIE (174 aa)) is the OBG-type G domain. Residues 166–173 (GMPNAGKS), 191–195 (FTTMV), 213–216 (DIPG), 283–286 (NKLD), and 314–316 (SGL) contribute to the GTP site. The Mg(2+) site is built by Ser-173 and Thr-193. The segment at 381-406 (ESMMDDDDDFDDDEDDGDVESIYVRD) is disordered. Acidic residues predominate over residues 383 to 399 (MMDDDDDFDDDEDDGDV).

Belongs to the TRAFAC class OBG-HflX-like GTPase superfamily. OBG GTPase family. As to quaternary structure, monomer. The cofactor is Mg(2+).

It is found in the cytoplasm. In terms of biological role, an essential GTPase which binds GTP, GDP and possibly (p)ppGpp with moderate affinity, with high nucleotide exchange rates and a fairly low GTP hydrolysis rate. Plays a role in control of the cell cycle, stress response, ribosome biogenesis and in those bacteria that undergo differentiation, in morphogenesis control. This is GTPase Obg from Acinetobacter baumannii (strain ACICU).